The following is a 249-amino-acid chain: Isoamyl acetate-hydrolyzing esterase 1 homolog (249 aa).

S24 functions as the Nucleophile in the catalytic mechanism. K63 bears the N6-succinyllysine mark. The Proton donor role is filled by D197. The Proton acceptor role is filled by H200.

It belongs to the 'GDSL' lipolytic enzyme family. IAH1 subfamily.

Probable lipase. This chain is Isoamyl acetate-hydrolyzing esterase 1 homolog (IAH1), found in Bos taurus (Bovine).